The sequence spans 440 residues: Thymidine phosphorylase (440 aa).

Belongs to the thymidine/pyrimidine-nucleoside phosphorylase family. As to quaternary structure, homodimer.

The enzyme catalyses thymidine + phosphate = 2-deoxy-alpha-D-ribose 1-phosphate + thymine. It functions in the pathway pyrimidine metabolism; dTMP biosynthesis via salvage pathway; dTMP from thymine: step 1/2. Its function is as follows. The enzymes which catalyze the reversible phosphorolysis of pyrimidine nucleosides are involved in the degradation of these compounds and in their utilization as carbon and energy sources, or in the rescue of pyrimidine bases for nucleotide synthesis. This chain is Thymidine phosphorylase, found in Burkholderia pseudomallei (strain K96243).